Reading from the N-terminus, the 143-residue chain is Alpha-S2-casein-like B (143 aa).

An N-terminal signal peptide occupies residues 1-15 (MKFIILTCLLAVALA).

The protein belongs to the alpha-casein family. In terms of tissue distribution, mammary gland specific. Secreted in milk.

It localises to the secreted. Important role in the capacity of milk to transport calcium phosphate. This Mus musculus (Mouse) protein is Alpha-S2-casein-like B (Csn1s2b).